The following is a 201-amino-acid chain: Proteasome subunit beta 1 (201 aa).

Position 1 (methionine 1) is a propeptide, removed in mature form; by autocatalysis. Catalysis depends on threonine 2, which acts as the Nucleophile.

Belongs to the peptidase T1B family. As to quaternary structure, the 20S proteasome core is composed of 14 alpha and 14 beta subunits that assemble into four stacked heptameric rings, resulting in a barrel-shaped structure. The two inner rings, each composed of seven catalytic beta subunits, are sandwiched by two outer rings, each composed of seven alpha subunits. The catalytic chamber with the active sites is on the inside of the barrel. Has a gated structure, the ends of the cylinder being occluded by the N-termini of the alpha-subunits. Is capped at one or both ends by the proteasome regulatory ATPase, PAN.

The protein resides in the cytoplasm. It carries out the reaction Cleavage of peptide bonds with very broad specificity.. Its activity is regulated as follows. The formation of the proteasomal ATPase PAN-20S proteasome complex, via the docking of the C-termini of PAN into the intersubunit pockets in the alpha-rings, triggers opening of the gate for substrate entry. Interconversion between the open-gate and close-gate conformations leads to a dynamic regulation of the 20S proteasome proteolysis activity. Its function is as follows. Component of the proteasome core, a large protease complex with broad specificity involved in protein degradation. This Pyrobaculum neutrophilum (strain DSM 2338 / JCM 9278 / NBRC 100436 / V24Sta) (Thermoproteus neutrophilus) protein is Proteasome subunit beta 1.